A 187-amino-acid chain; its full sequence is UPF0232 protein JTY_0004 (187 aa).

Composition is skewed to basic and acidic residues over residues 1–17 (MTGS…ERSM) and 24–45 (LVRR…DAGR). Disordered regions lie at residues 1-75 (MTGS…DPQP) and 168-187 (PSWR…DTYG).

It belongs to the UPF0232 family.

The chain is UPF0232 protein JTY_0004 from Mycobacterium bovis (strain BCG / Tokyo 172 / ATCC 35737 / TMC 1019).